The primary structure comprises 101 residues: Small ribosomal subunit protein uS14 (101 aa).

The tract at residues 33–69 is disordered; that stretch reads SQDASYEEKIDASTKLQKLPRDSSPSRHRNRCELSGR. The span at 51–68 shows a compositional bias: basic and acidic residues; it reads LPRDSSPSRHRNRCELSG.

It belongs to the universal ribosomal protein uS14 family. In terms of assembly, part of the 30S ribosomal subunit. Contacts proteins S3 and S10.

Binds 16S rRNA, required for the assembly of 30S particles and may also be responsible for determining the conformation of the 16S rRNA at the A site. This is Small ribosomal subunit protein uS14 from Xanthomonas axonopodis pv. citri (strain 306).